The primary structure comprises 56 residues: Large ribosomal subunit protein bL32 (56 aa).

The tract at residues 1–56 is disordered; the sequence is MAVPARRTSKAKKNKRRTHKGLTTPGLSRDSETGEYRMSHRISPDGTYKGRTIIEK. Residues 7 to 20 are compositionally biased toward basic residues; that stretch reads RTSKAKKNKRRTHK. The span at 29–38 shows a compositional bias: basic and acidic residues; it reads RDSETGEYRM.

The protein belongs to the bacterial ribosomal protein bL32 family.

This chain is Large ribosomal subunit protein bL32, found in Listeria monocytogenes serotype 4a (strain HCC23).